Reading from the N-terminus, the 143-residue chain is Large ribosomal subunit protein uL11 (143 aa).

It belongs to the universal ribosomal protein uL11 family. As to quaternary structure, part of the ribosomal stalk of the 50S ribosomal subunit. Interacts with L10 and the large rRNA to form the base of the stalk. L10 forms an elongated spine to which L12 dimers bind in a sequential fashion forming a multimeric L10(L12)X complex. Post-translationally, one or more lysine residues are methylated.

In terms of biological role, forms part of the ribosomal stalk which helps the ribosome interact with GTP-bound translation factors. The polypeptide is Large ribosomal subunit protein uL11 (Azotobacter vinelandii (strain DJ / ATCC BAA-1303)).